The chain runs to 315 residues: MRIVFMGTPEFAVPSLRSIAAEHNHFELVLVVTGSDKPRRGRNAPSEPSPVKSAALELGFQVYETDDVSSSDFLSVVADSAPDVIVVAAFRILPPEVYGQAKLGAFNLHASLLPAYRGAAPINWAIINGEKESGVTTFFLQKTVDTGNVIMQEKIPVLPDDNASILSVKLSHLGAELVVKTLRSIQAGTVEVQAQDDAFFSRAPKLTRENTRIRWNQPVAVLSDFIRGLAMKPAAWTTVQNRTMKIFRAIPFTEEITSSIEQPGSILVERGRFLVRGSDGWLEVKQLQPEGRKPMEGAEFARGFRPESGTSLLFE.

111–114 (SLLP) contributes to the (6S)-5,6,7,8-tetrahydrofolate binding site.

Belongs to the Fmt family.

It carries out the reaction L-methionyl-tRNA(fMet) + (6R)-10-formyltetrahydrofolate = N-formyl-L-methionyl-tRNA(fMet) + (6S)-5,6,7,8-tetrahydrofolate + H(+). Its function is as follows. Attaches a formyl group to the free amino group of methionyl-tRNA(fMet). The formyl group appears to play a dual role in the initiator identity of N-formylmethionyl-tRNA by promoting its recognition by IF2 and preventing the misappropriation of this tRNA by the elongation apparatus. In Chlorobium phaeobacteroides (strain DSM 266 / SMG 266 / 2430), this protein is Methionyl-tRNA formyltransferase.